We begin with the raw amino-acid sequence, 883 residues long: MPSLNDIRSTFLDYFRRNGHRVVESSPLVPRNDPTLMFTNSGMVQFKNCFTGLEHRDYTRATTAQKCVRAGGKHNDLDNVGYTARHHTFFEMLGNFSFGDYFKSDAIPFAWELLTKDFDIPKEKLLVTVYHTDDEAAEIWKKVAGLPDERIIRIPTNDNFWMMGPTGPCGPCTEIFFDHGPSIWGGPPGSADEDGDRFIEIWNLVFMQNEQHPDGSMTPLPKQSIDTGMGLERIGALLQGKHDNYDTDLMRSLIEASAHATSTDPDGPGKTHHRVIADHLRSTSFLIADGVMPSNEGRGYVLRRIMRRAMRHAHLLGAQDPVMHRLVPALVRQMGAAYPELTRGQALIEETLKLEETRFRQTLERGLRLLEDELGHLPEGSPLPGEAAFKLYDTYGFPLDLTQDALREKGRKVDVEGFEAAMAEQKAKARASWSGSGETKDAAIWFDLAETHGATEFLGYDTEQAEGQVLALVAAGAETASAGAGQTVQIILNQTPFYAESGGQVGDTGELRTDTGRARITDVKKGQGLFLHFAEVVEGEIRQGQGATLVVDHARRSAIRANHSATHLLHEALRRALGDHVAQRGSLNAPDRLRFDFSHSRALSPEELAAVEAEVNGFIRSNGAVETRIMSPDDARALGAQALFGEKYGDEVRVVSMGTLAGSGKGTDGQTYSLELCGGTHVSRLGDIGLCVILGDSASSAGVRRIEALTGEGALAYLNEQMKRLTDVAAALKAAPAELVDRVKALVEERRQLQNEVAQLRREAAMGGGAASEAKEIGGVKFLAQVVQGVPGKDMPGLIDEMKARVGSGAVLLISDTGGKAALAAGVTPDLTDRLSAVTLVKAAAEALGGRGGGGRPDMAQAGAADASQADAAIRAAEAVMGG.

Residues His-563, His-567, Cys-677, and His-681 each coordinate Zn(2+).

The protein belongs to the class-II aminoacyl-tRNA synthetase family. The cofactor is Zn(2+).

The protein localises to the cytoplasm. It carries out the reaction tRNA(Ala) + L-alanine + ATP = L-alanyl-tRNA(Ala) + AMP + diphosphate. Functionally, catalyzes the attachment of alanine to tRNA(Ala) in a two-step reaction: alanine is first activated by ATP to form Ala-AMP and then transferred to the acceptor end of tRNA(Ala). Also edits incorrectly charged Ser-tRNA(Ala) and Gly-tRNA(Ala) via its editing domain. The chain is Alanine--tRNA ligase from Cereibacter sphaeroides (strain ATCC 17023 / DSM 158 / JCM 6121 / CCUG 31486 / LMG 2827 / NBRC 12203 / NCIMB 8253 / ATH 2.4.1.) (Rhodobacter sphaeroides).